Here is a 393-residue protein sequence, read N- to C-terminus: Matrix metalloproteinase-23 (393 aa).

Over 1–20 (MGRGACVPSAASGAGDRARQ) the chain is Cytoplasmic. The propeptide occupies 1-81 (MGRGACVPSA…PHPPVPRRRR (81 aa)). A helical; Signal-anchor for type II membrane protein transmembrane segment spans residues 21–41 (LGAVLGALCLFPALVLLAWPG). Residues 42-393 (TPANGAGARV…TYSWRIRVRS (352 aa)) lie on the Lumenal side of the membrane. The disordered stretch occupies residues 60–79 (TSGVLASGSLGPPHPPVPRR). Asn95 and Asn151 each carry an N-linked (GlcNAc...) asparagine glycan. His214 contributes to the Zn(2+) binding site. The active site involves Glu215. Zn(2+)-binding residues include His218 and His224. N-linked (GlcNAc...) asparagine glycosylation occurs at Asn235. A ShKT domain is found at 258 to 292 (CLDRLFVCASWARRGFCDTRRRLMKRLCPSSCDFC). Cystine bridges form between Cys258/Cys292, Cys265/Cys285, and Cys274/Cys289. In terms of domain architecture, Ig-like C2-type spans 298-383 (PTVAATPPPP…VVRRRQRVLS (86 aa)). Residue Asn319 is glycosylated (N-linked (GlcNAc...) asparagine). A disulfide bond links Cys324 and Cys373.

Belongs to the peptidase M10A family. Zn(2+) is required as a cofactor. N-glycosylated. Post-translationally, proteolytic cleavage might yield an active form.

Its subcellular location is the membrane. It localises to the endoplasmic reticulum membrane. In terms of biological role, protease. May regulate the surface expression of some potassium channels by retaining them in the endoplasmic reticulum. The protein is Matrix metalloproteinase-23 (MMP23) of Bos taurus (Bovine).